The primary structure comprises 388 residues: 2-epi-5-epi-valiolone synthase (388 aa).

NAD(+) contacts are provided by residues 92–95 (ERNK), 124–128 (GIVAD), 148–149 (TT), Lys-161, Lys-170, and 188–191 (LLAT). Residues Glu-203, His-267, and His-283 each coordinate Zn(2+).

Belongs to the sugar phosphate cyclases superfamily. EEVS-like family. NAD(+) is required as a cofactor. The cofactor is Co(2+). It depends on Zn(2+) as a cofactor.

It catalyses the reaction D-sedoheptulose 7-phosphate = 2-epi-5-epi-valiolone + phosphate. Its function is as follows. Catalyzes the cyclization of D-sedoheptulose 7-phosphate to 2-epi-5-epi-valiolone. Probably involved in acarbose biosynthesis. This Streptomyces glaucescens protein is 2-epi-5-epi-valiolone synthase.